The primary structure comprises 336 residues: Pentalenene synthase (336 aa).

Residues Asp-80, Asp-84, Asn-219, Ser-223, and Glu-227 each contribute to the Mg(2+) site. Positions Asp-80–Asp-84 match the DDXXD motif motif.

This sequence belongs to the terpene synthase family. Monomer. Mg(2+) is required as a cofactor.

It catalyses the reaction (2E,6E)-farnesyl diphosphate = pentalenene + diphosphate. The protein operates within antibiotic biosynthesis; neopentalenolactone biosynthesis. Its function is as follows. Catalyzes the cyclization of farnesyl diphosphate (FPP) to the tricyclic sesquiterpene pentalenene in the biosynthesis of neopentalenolactone antibiotic. The chain is Pentalenene synthase (ptlA) from Streptomyces avermitilis (strain ATCC 31267 / DSM 46492 / JCM 5070 / NBRC 14893 / NCIMB 12804 / NRRL 8165 / MA-4680).